The sequence spans 479 residues: B-cell CLL/lymphoma 6 member B protein (479 aa).

The BTB domain occupies Thr38–Pro105. 2 disordered regions span residues Arg143–Lys190 and Gly210–Thr259. Residues Ala147–Ser160 show a composition bias toward pro residues. The span at Arg162–Thr172 shows a compositional bias: basic and acidic residues. A compositionally biased stretch (low complexity) spans Ser234–Ser244. 5 C2H2-type zinc fingers span residues Tyr328–His350, Tyr356–His378, Tyr384–His406, Tyr412–His434, and Tyr440–His463.

Associates with BCL6 through the BTB domain. In terms of tissue distribution, ubiquitously expressed with higher expression found in heart and placenta.

It is found in the nucleus. Acts as a sequence-specific transcriptional repressor in association with BCL6. May function in a narrow stage or be related to some events in the early B-cell development. The protein is B-cell CLL/lymphoma 6 member B protein (BCL6B) of Homo sapiens (Human).